The following is a 367-amino-acid chain: Glutamate 5-kinase (367 aa).

Lysine 9 is a binding site for ATP. Residues serine 49, aspartate 136, and asparagine 148 each contribute to the substrate site. ATP contacts are provided by residues 168–169 (TD) and 210–216 (TGGMKSK). Residues 276 to 350 (SGQIEVDAGA…GMQSQDIQVR (75 aa)) enclose the PUA domain.

It belongs to the glutamate 5-kinase family.

The protein resides in the cytoplasm. The catalysed reaction is L-glutamate + ATP = L-glutamyl 5-phosphate + ADP. Its pathway is amino-acid biosynthesis; L-proline biosynthesis; L-glutamate 5-semialdehyde from L-glutamate: step 1/2. Catalyzes the transfer of a phosphate group to glutamate to form L-glutamate 5-phosphate. The protein is Glutamate 5-kinase of Bacillus cereus (strain B4264).